We begin with the raw amino-acid sequence, 688 residues long: Methionine--tRNA ligase (688 aa).

The short motif at 13-23 (PYANGNFHIGH) is the 'HIGH' region element. Cys144, Cys147, Cys157, and Cys160 together coordinate Zn(2+). A 'KMSKS' region motif is present at residues 342–346 (KMSKS). Lys345 is an ATP binding site. Residues 582 to 688 (DFAKVDLRIA…PGAQPGMRIH (107 aa)) enclose the tRNA-binding domain.

The protein belongs to the class-I aminoacyl-tRNA synthetase family. MetG type 1 subfamily. As to quaternary structure, homodimer. It depends on Zn(2+) as a cofactor.

Its subcellular location is the cytoplasm. It catalyses the reaction tRNA(Met) + L-methionine + ATP = L-methionyl-tRNA(Met) + AMP + diphosphate. Its function is as follows. Is required not only for elongation of protein synthesis but also for the initiation of all mRNA translation through initiator tRNA(fMet) aminoacylation. This chain is Methionine--tRNA ligase, found in Acidovorax ebreus (strain TPSY) (Diaphorobacter sp. (strain TPSY)).